The primary structure comprises 740 residues: Ion-translocating oxidoreductase complex subunit C (740 aa).

4Fe-4S ferredoxin-type domains lie at 369 to 397 (GEPQ…QQLY) and 407 to 436 (KATT…VQYF). [4Fe-4S] cluster contacts are provided by Cys-377, Cys-380, Cys-383, Cys-387, Cys-416, Cys-419, Cys-422, and Cys-426. Disordered regions lie at residues 602–652 (KLEQ…DPRK), 664–685 (ARKL…PRKA), and 695–714 (KARK…QVDP). A compositionally biased stretch (low complexity) spans 605–615 (QQQANAEPEQQ).

The protein belongs to the 4Fe4S bacterial-type ferredoxin family. RnfC subfamily. As to quaternary structure, the complex is composed of six subunits: RsxA, RsxB, RsxC, RsxD, RsxE and RsxG. [4Fe-4S] cluster serves as cofactor.

The protein resides in the cell inner membrane. In terms of biological role, part of a membrane-bound complex that couples electron transfer with translocation of ions across the membrane. Required to maintain the reduced state of SoxR. This chain is Ion-translocating oxidoreductase complex subunit C, found in Escherichia coli O157:H7.